A 196-amino-acid polypeptide reads, in one-letter code: MSYYAFEGLIPVVHPTAFVHPSAVLIGDVIVGAGVYIGPLASLRGDYGRLLVQAGANIQDGCIMHGYCDTDTIVGENGHIGHGAILHGCVIGRDALVGMNSVIMDGAVIGEESIVAAMSFVKAGFRGEKRQLLMGTPARAVRSVSDDELHWKRLNTKEYQDLVGRCHASLHETQPLRQMEGNRPRLQGTTDVAPKR.

The disordered stretch occupies residues 173–196 (TQPLRQMEGNRPRLQGTTDVAPKR).

This sequence belongs to the transferase hexapeptide repeat family.

It participates in amine and polyamine metabolism; carnitine metabolism. Overproduction of CaiE stimulates the activity of CaiB and CaiD. This chain is Carnitine operon protein CaiE, found in Escherichia coli (strain SMS-3-5 / SECEC).